Consider the following 3177-residue polypeptide: Proliferation marker protein Ki-67 (3177 aa).

The FHA domain maps to 27 to 76 (CLFGRSIECDIRIQLPVVSKRHCKIEVKEQEAILYNFSSTNPTQVNGVTI). Composition is skewed to basic and acidic residues over residues 98-107 (EDGNHEDGSK) and 116-126 (LGKEPSRRASR). 2 disordered regions span residues 98–442 (EDGN…PGLS) and 473–572 (RPEL…ASIS). Residues Ser125, Ser128, and Ser162 each carry the phosphoserine modification. Polar residues-rich tracts occupy residues 165 to 177 (SDGS…QDSS) and 202 to 221 (STGS…LSNS). The segment covering 235–263 (MKEELDVKSQKSCRKSEPQPDRAAEESRE) has biased composition (basic and acidic residues). Lys236 is covalently cross-linked (Glycyl lysine isopeptide (Lys-Gly) (interchain with G-Cter in SUMO2)). Residues Ser250, Ser276, Ser277, Ser286, and Ser287 each carry the phosphoserine modification. Over residues 276-286 (SSGSTPVTAAS) the composition is skewed to polar residues. Phosphothreonine is present on residues Thr307 and Thr316. Ser321, Ser337, Ser373, Ser498, Ser503, and Ser588 each carry phosphoserine. The tract at residues 455–618 (KSEGMPMKRR…VKQTQTKVAK (164 aa)) is positively charged patch (CP). The 48-residue stretch at 462–509 (KRRRVSFGGHLRPELFDENLPPNTPLKRGETPTKRKSLGTHSPAVLKT) folds into the PP1-binding domain. The segment at 614–652 (TKVAKHVPQKQTSKRQRRPSTPKKPTSNLHNQFTTGHAN) is disordered. Positions 616–634 (VAKHVPQKQTSKRQRRPST) are enriched in basic residues. Positions 636–652 (KKPTSNLHNQFTTGHAN) are enriched in polar residues. Thr701 is modified (phosphothreonine). 3 disordered regions span residues 793 to 815 (LEKK…SKLR), 835 to 901 (VLAE…LGSQ), and 956 to 989 (KHSP…DKPI). Polar residues predominate over residues 855-864 (DQQVQDNENA). Basic and acidic residues-rich tracts occupy residues 867-882 (RCKE…EKTS) and 975-989 (LKEH…DKPI). 16 K167R repeats span residues 994–1101 (TRVL…FISP), 1108–1216 (KKIP…FQTP), 1228–1336 (SAKI…FQTP), 1348–1450 (SAKM…FQIP), 1461–1569 (KTKK…FQMP), 1582–1684 (TMLA…LFQT), 1696–1806 (KQTR…FQTP), 1817–1925 (ETTK…FQTP), 1937–2046 (SAKI…FQTP), 2059–2163 (VKMS…FQTP), 2175–2284 (SAKM…FQTP), 2296–2405 (SAKI…VFQT), 2419–2526 (AKLP…CQAP), 2537–2639 (KTPK…SFQE), 2643–2748 (KRIS…PIQT), and 2762–2870 (TQMP…ITQI). Glycyl lysine isopeptide (Lys-Gly) (interchain with G-Cter in SUMO2) cross-links involve residues Lys1013 and Lys1026. Position 1062 is a phosphoserine (Ser1062). A Glycyl lysine isopeptide (Lys-Gly) (interchain with G-Cter in SUMO1); alternate cross-link involves residue Lys1082. Lys1082 is covalently cross-linked (Glycyl lysine isopeptide (Lys-Gly) (interchain with G-Cter in SUMO2); alternate). Disordered stretches follow at residues 1109–1321 (KIPS…IRAQ) and 1334–1410 (QTPA…ENDC). Position 1114 is a phosphoserine (Ser1114). Over residues 1114 to 1127 (SPHTQPVRTPASTK) the composition is skewed to polar residues. A Phosphothreonine modification is found at Thr1122. Ser1125 bears the Phosphoserine mark. Thr1150 carries the phosphothreonine modification. Phosphoserine is present on Ser1152. 2 positions are modified to phosphothreonine: Thr1159 and Thr1175. The residue at position 1189 (Ser1189) is a Phosphoserine. Thr1215 carries the post-translational modification Phosphothreonine. Residue Ser1235 is modified to Phosphoserine. Phosphothreonine occurs at positions 1243, 1279, 1295, 1307, and 1315. Over residues 1308–1317 (GHKRRPRTPK) the composition is skewed to basic residues. Lys1317 participates in a covalent cross-link: Glycyl lysine isopeptide (Lys-Gly) (interchain with G-Cter in SUMO2). Position 1335 is a phosphothreonine (Thr1335). Over residues 1353–1368 (LESSQAEPVKTPASTK) the composition is skewed to polar residues. The residue at position 1356 (Ser1356) is a Phosphoserine. Thr1363 is modified (phosphothreonine). Position 1366 is a phosphoserine (Ser1366). A compositionally biased stretch (basic and acidic residues) spans 1371 to 1384 (SKTDLSKVDVREDP). Residues Thr1400 and Thr1416 each carry the phosphothreonine modification. A Phosphoserine modification is found at Ser1469. A Phosphothreonine modification is found at Thr1477. Ser1480 is subject to Phosphoserine. Position 1513 is a phosphothreonine (Thr1513). The segment at 1526 to 1550 (RKPAKRKLDSTAGMPNSKRMRCSSK) is disordered. A phosphoserine mark is found at Ser1542 and Ser1587. Lys1609 carries the post-translational modification N6-acetyllysine. Residue Lys1668 forms a Glycyl lysine isopeptide (Lys-Gly) (interchain with G-Cter in SUMO2) linkage. A phosphothreonine mark is found at Thr1684 and Thr1712. Ser1734 is subject to Phosphoserine. Residues 1749–1797 (IPIGPEDDTENKGVKESTPQTLDSSASRTVSKRQQGAHEERPQFSGDLF) are disordered. Residues 1765-1782 (STPQTLDSSASRTVSKRQ) are compositionally biased toward polar residues. Phosphothreonine is present on Thr1766. Residue Ser1779 is modified to Phosphoserine. Thr1805 bears the Phosphothreonine mark. Phosphoserine is present on Ser1825. A phosphothreonine mark is found at Thr1859, Thr1868, Thr1884, and Thr1924. A disordered region spans residues 1925 to 2033 (PAGASDPVSV…QTPKIRAQPL (109 aa)). Ser1944 is modified (phosphoserine). N6-acetyllysine is present on Lys1966. Residues Thr1989, Thr2005, and Thr2025 each carry the phosphothreonine modification. Lys2027 participates in a covalent cross-link: Glycyl lysine isopeptide (Lys-Gly) (interchain with G-Cter in SUMO1); alternate. Lys2027 is covalently cross-linked (Glycyl lysine isopeptide (Lys-Gly) (interchain with G-Cter in SUMO2); alternate). Residue Thr2045 is modified to Phosphothreonine. The segment at 2047-2112 (AGANDSVTVE…SPGTPAPVQE (66 aa)) is disordered. Over residues 2063–2078 (LESSQAEPVKTPASTK) the composition is skewed to polar residues. Position 2065 is a phosphoserine (Ser2065). Thr2073 carries the phosphothreonine modification. 3 positions are modified to phosphoserine: Ser2076, Ser2095, and Ser2103. A compositionally biased stretch (basic and acidic residues) spans 2088-2101 (VDVREDPSILEKKT). A phosphothreonine mark is found at Thr2106 and Thr2122. The segment at 2124–2343 (KQKLDFTGNS…PLSKSSCASQ (220 aa)) is disordered. A compositionally biased stretch (basic residues) spans 2135–2144 (GHKRRPRTPK). At Thr2162 the chain carries Phosphothreonine. Residues 2180–2195 (LESSQAKPVKTPASTK) are compositionally biased toward polar residues. Phosphoserine is present on Ser2182. At Thr2190 the chain carries Phosphothreonine. Ser2198 is subject to Phosphoserine. Thr2218 carries the post-translational modification Phosphothreonine. Ser2220 is subject to Phosphoserine. Phosphothreonine is present on residues Thr2227, Thr2243, and Thr2283. Ser2303 is modified (phosphoserine). 2 positions are modified to phosphothreonine: Thr2311 and Thr2348. A compositionally biased stretch (basic residues) spans 2378–2390 (RGKRQQRSCKKRS). Residues 2378-2447 (RGKRQQRSCK…RRQARTGLRK (70 aa)) form a disordered region. A phosphoserine mark is found at Ser2390 and Ser2392. Thr2405 carries the phosphothreonine modification. Phosphoserine occurs at positions 2423 and 2425. Lys2451 participates in a covalent cross-link: Glycyl lysine isopeptide (Lys-Gly) (interchain with G-Cter in SUMO1). Phosphoserine is present on residues Ser2464, Ser2487, Ser2545, and Ser2592. Basic and acidic residues predominate over residues 2538–2547 (TPKMPDKSPE). Disordered regions lie at residues 2538 to 2828 (TPKM…QVSK) and 2879 to 3160 (HDTS…DAKT). A compositionally biased stretch (polar residues) spans 2605 to 2622 (VQKQDPSVSLTGRRNQPR). Ser2649 is modified (phosphoserine). Basic and acidic residues-rich tracts occupy residues 2673–2697 (GVKE…KEPV) and 2704–2714 (EEVKKSTKQKI). A Glycyl lysine isopeptide (Lys-Gly) (interchain with G-Cter in SUMO1); alternate cross-link involves residue Lys2675. Lys2675 is covalently cross-linked (Glycyl lysine isopeptide (Lys-Gly) (interchain with G-Cter in SUMO2); alternate). 2 stretches are compositionally biased toward polar residues: residues 2764 to 2781 (MPCN…QSSP) and 2883 to 2892 (ILKSTQQQKP). Phosphoserine occurs at positions 2768 and 2780. Over residues 2907-2923 (ASKEDPKEVLVDTRDHA) the composition is skewed to basic and acidic residues. Lys2909 participates in a covalent cross-link: Glycyl lysine isopeptide (Lys-Gly) (interchain with G-Cter in SUMO2). Position 2928 is an N6-acetyllysine (Lys2928). Basic and acidic residues predominate over residues 2959-2971 (EATDEKPVPEKKR). 2973-2980 (ASSKRHVS) provides a ligand contact to ATP. At Ser2980 the chain carries Phosphoserine. Residues 3008-3018 (KTEEMEAKREN) are compositionally biased toward basic and acidic residues. Thr3021 is modified (phosphothreonine). Residues 3039-3057 (PKFDASAENVGIKKNEKTM) show a composition bias toward basic and acidic residues. A compositionally biased stretch (polar residues) spans 3058–3067 (KTASQETELQ). Ser3061 is subject to Phosphoserine. Composition is skewed to basic and acidic residues over residues 3118-3132 (PQEE…DVRC) and 3140-3160 (VALD…DAKT).

As to quaternary structure, interacts with KIF15. Interacts (via the FHA domain) with NIFK. Interacts with PPP1CC. Component of a complex at least composed of ZNF335, HCFC1, CCAR2, EMSY, MKI67, RBBP5, ASH2L and WDR5; the complex is formed as a result of interactions between components of a nuclear receptor-mediated transcription complex and a histone methylation complex. Interacts with ZNF335. Post-translationally, hyperphosphorylated by CDK1 in mitosis; hyperphosphorylatiom prevents undergoing liquid-liquid phase separation. Dephosphorylated by PPP1CC at the onset of anaphase. Dephosphorylation by protein phosphatase 2A (PP2A) and simultaneous exposure of the positively charged patch (CP) during mitotic exit induce the RNA-dependent formation of a liquid-like condensed phase on the chromosome surface. Ubiquitinated by the APC/C complex after neuronal progenitors exit mitosis during brain development, leading to clearance from constitutive heterochromatin. Mainly present in proliferating cells (at protein level).

It localises to the chromosome. Its subcellular location is the nucleus. The protein resides in the nucleolus. Functionally, protein that associates with the surface of mitotic chromosomes and acts both as a chromosome repellent during early mitosis and chromosome attractant during late mitosis. Required to maintain individual mitotic chromosomes dispersed in the cytoplasm following nuclear envelope disassembly. During early mitosis, relocalizes from nucleoli to the chromosome surface where it forms extended brush structures that cover a substantial fraction of the chromosome surface. The MKI67 brush structure prevents chromosomes from collapsing into a single chromatin mass by forming a steric and electrostatic charge barrier: the protein has a high net electrical charge and acts as a surfactant, dispersing chromosomes and enabling independent chromosome motility. During mitotic anaphase, the MKI67 brush structure collapses and MKI67 switches from a chromosome repellent to a chromosome attractant to promote chromosome clustering and facilitate the exclusion of large cytoplasmic particles from the future nuclear space. Mechanistically, dephosphorylation during mitotic exit and simultaneous exposure of a conserved basic patch induce the RNA-dependent formation of a liquid-like condensed phase on the chromosome surface, promoting coalescence of neighboring chromosome surfaces and clustering of chromosomes. Binds premature ribosomal RNAs during anaphase; promoting liquid-liquid phase separation. Binds DNA, with a preference for supercoiled DNA and AT-rich DNA. Does not contribute to the internal structure of mitotic chromosomes. May play a role in chromatin organization; it is however unclear whether it plays a direct role in chromatin organization or whether it is an indirect consequence of its function in mitotic chromosome. This Mus musculus (Mouse) protein is Proliferation marker protein Ki-67.